The chain runs to 355 residues: UDP-3-O-acylglucosamine N-acyltransferase (355 aa).

His248 serves as the catalytic Proton acceptor.

The protein belongs to the transferase hexapeptide repeat family. LpxD subfamily. Homotrimer.

It carries out the reaction a UDP-3-O-[(3R)-3-hydroxyacyl]-alpha-D-glucosamine + a (3R)-hydroxyacyl-[ACP] = a UDP-2-N,3-O-bis[(3R)-3-hydroxyacyl]-alpha-D-glucosamine + holo-[ACP] + H(+). Its pathway is bacterial outer membrane biogenesis; LPS lipid A biosynthesis. Its function is as follows. Catalyzes the N-acylation of UDP-3-O-acylglucosamine using 3-hydroxyacyl-ACP as the acyl donor. Is involved in the biosynthesis of lipid A, a phosphorylated glycolipid that anchors the lipopolysaccharide to the outer membrane of the cell. This is UDP-3-O-acylglucosamine N-acyltransferase from Synechococcus elongatus (strain ATCC 33912 / PCC 7942 / FACHB-805) (Anacystis nidulans R2).